The sequence spans 599 residues: Glycerophosphodiester phosphodiesterase domain-containing protein 5 (599 aa).

The Cytoplasmic segment spans residues 1–42; it reads MVKHQPLQYYEPQLCLSCLTGIYGCRWKRYQRSHDDTTKWER. 2 disulfide bridges follow: Cys15–Cys18 and Cys25–Cys576. Residues 43–63 form a helical membrane-spanning segment; that stretch reads LWFLILTSSFFLTLVWFYFWW. The Extracellular segment spans residues 64-87; sequence EVHNDYNEINWFLYNRMGYWSDWS. Residues 88-108 form a helical membrane-spanning segment; it reads IPILVTTAAGFTYITVLLILA. At 109–125 the chain is on the cytoplasmic side; sequence LCHIAVGQQMNLHWLHK. A helical transmembrane segment spans residues 126 to 146; the sequence is IGLMTTLITTVVTMSSIAQLW. Over 147–160 the chain is Extracellular; that stretch reads DDEWEMVFISLQAT. The helical transmembrane segment at 161–181 threads the bilayer; that stretch reads APFLHIGALAAVTALSWLIAG. Topologically, residues 182 to 192 are cytoplasmic; the sequence is QFARMEKATSQ. Residues 193–213 traverse the membrane as a helical segment; the sequence is MLMVTAYLAVVVALYLVPLTI. Residues 214-497 lie on the Extracellular side of the membrane; sequence SSPCIMEKKA…IWLMPPDEYR (284 aa). The 258-residue stretch at 228–485 folds into the GP-PDE domain; it reads PAIIGHRGAP…DSSHVLRKVP (258 aa). Asn301, Asn336, Asn352, Asn374, and Asn448 each carry an N-linked (GlcNAc...) asparagine glycan. Residues 498–518 traverse the membrane as a helical segment; the sequence is LIWITSDLISFIIIVGVFIFQ. At 519–599 the chain is on the cytoplasmic side; the sequence is NYHNDQWRLG…DHRDTRLRMN (81 aa).

Belongs to the glycerophosphoryl diester phosphodiesterase family. In terms of assembly, interacts with PRDX1; forms a mixed-disulfide with PRDX1, leading to disrupt intramolecular disulfide bond between Cys-25 and Cys-576. In terms of processing, intramolecular disulfide bond between Cys-25 and Cys-576 is reduced by PRDX1. Detected in mature motor neurons.

The protein localises to the endomembrane system. Its subcellular location is the cytoplasm. It is found in the perinuclear region. The protein resides in the cell projection. It localises to the growth cone. It catalyses the reaction a 1,2-diacyl-sn-glycero-3-phospho-(1D-myo-inositol-4,5-bisphosphate) + H2O = 1D-myo-inositol 1,4,5-trisphosphate + a 1,2-diacyl-sn-glycerol + H(+). It carries out the reaction sn-glycerol 3-phosphocholine + H2O = sn-glycerol 3-phosphate + choline + H(+). With respect to regulation, activated by PRDX1 by reduction of an intramolecular disulfide bond. Glycerophosphodiester phosphodiesterase that promotes cell cycle exit and drives spinal motor neuron differentiation. Mediates the cleavage of glycosylphosphatidylinositol (GPI) anchor of target proteins: removes the GPI-anchor of RECK, leading to release RECK from the plasma membrane. May contribute to the osmotic regulation of cellular glycerophosphocholine. The protein is Glycerophosphodiester phosphodiesterase domain-containing protein 5 (GDPD5) of Gallus gallus (Chicken).